The primary structure comprises 138 residues: Probable prefoldin subunit 4 (138 aa).

The protein belongs to the prefoldin subunit beta family. As to quaternary structure, heterohexamer of two PFD-alpha type and four PFD-beta type subunits.

Functionally, binds specifically to cytosolic chaperonin (c-CPN) and transfers target proteins to it. Binds to nascent polypeptide chain and promotes folding in an environment in which there are many competing pathways for nonnative proteins. The protein is Probable prefoldin subunit 4 of Drosophila melanogaster (Fruit fly).